Consider the following 137-residue polypeptide: uncharacterized protein (137 aa).

The CENP-V/GFA domain occupies 4–118 (YEGNCLCKAI…CIDDKPDCYD (115 aa)). Positions 8, 10, 27, 29, 32, 71, and 74 each coordinate Zn(2+).

This sequence belongs to the Gfa family. It depends on Zn(2+) as a cofactor.

Its subcellular location is the cytoplasm. The protein localises to the nucleus. This is an uncharacterized protein from Schizosaccharomyces pombe (strain 972 / ATCC 24843) (Fission yeast).